The chain runs to 1705 residues: Intersectin-1 (1705 aa).

2 EH domains span residues Glu21–Met109 and Ser220–Arg309. EF-hand domains are found at residues Leu53 to Lys88 and Leu253 to Ala288. Positions 66, 68, 70, 72, 77, 266, 268, 270, 272, and 277 each coordinate Ca(2+). 3 disordered regions span residues Val322–Asn355, Arg386–Glu433, and Arg668–Pro708. Residues Asp325–Lys697 are KLERQ. Residues Asn339 to Asn355 are compositionally biased toward basic and acidic residues. Residues Asp350–Glu687 are a coiled coil. Basic and acidic residues predominate over residues Arg668–Asn699. Residues Val732–Glu793 enclose the SH3 1 domain. Residues Ala823 to Asn833 are compositionally biased toward low complexity. Positions Ala823–Ser851 are disordered. A compositionally biased stretch (polar residues) spans Trp834–Thr846. The region spanning Val897 to Gly955 is the SH3 2 domain. The disordered stretch occupies residues Lys959–Ser978. Residues Ser960–Ser973 show a composition bias toward low complexity. 3 consecutive SH3 domains span residues Ile986–Ser1044, Lys1058–Pro1122, and Pro1139–Asp1198. A Bipartite nuclear localization signal; in isoform 2 motif is present at residues Arg1088 to Trp1111. One can recognise a DH domain in the interval Lys1221 to Gly1407. Positions Lys1446–Glu1555 constitute a PH domain. The 117-residue stretch at Lys1563 to Val1679 folds into the C2 domain. Positions 1651, 1654, and 1657 each coordinate Ca(2+).

In terms of assembly, binds epn1 and epn2. Ca(2+) serves as cofactor.

It is found in the endomembrane system. The protein localises to the synapse. It localises to the synaptosome. The protein resides in the cell projection. Its subcellular location is the lamellipodium. It is found in the cell membrane. The protein localises to the membrane. It localises to the clathrin-coated pit. The protein resides in the recycling endosome. Its subcellular location is the cytoplasm. It is found in the nucleus envelope. Adapter protein that provides a link between the endocytic membrane traffic and the actin assembly machinery. Acts as a guanine nucleotide exchange factor (GEF) for cdc42, and thereby stimulates actin nucleation mediated by wasl and the arp2/3 complex. Involved in endocytosis of activated egfr, and probably also other growth factor receptors. This is Intersectin-1 (itsn1) from Xenopus laevis (African clawed frog).